Here is a 269-residue protein sequence, read N- to C-terminus: Tryptophan synthase alpha chain (269 aa).

Residues Glu-49 and Asp-60 each act as proton acceptor in the active site.

It belongs to the TrpA family. As to quaternary structure, tetramer of two alpha and two beta chains.

It carries out the reaction (1S,2R)-1-C-(indol-3-yl)glycerol 3-phosphate + L-serine = D-glyceraldehyde 3-phosphate + L-tryptophan + H2O. Its pathway is amino-acid biosynthesis; L-tryptophan biosynthesis; L-tryptophan from chorismate: step 5/5. The alpha subunit is responsible for the aldol cleavage of indoleglycerol phosphate to indole and glyceraldehyde 3-phosphate. The sequence is that of Tryptophan synthase alpha chain from Pseudomonas putida (Arthrobacter siderocapsulatus).